The following is a 294-amino-acid chain: GTPase Era (294 aa).

One can recognise an Era-type G domain in the interval 2–171; sequence NSGVVTIIGR…LSLLIELLPE (170 aa). Positions 10–17 are G1; sequence GRPSAGKS. 10-17 contacts GTP; the sequence is GRPSAGKS. The G2 stretch occupies residues 36–40; the sequence is QTTRN. A G3 region spans residues 57 to 60; sequence DTPG. GTP is bound by residues 57–61 and 119–122; these read DTPGY and NKAD. Residues 119–122 are G4; the sequence is NKAD. Residues 150–152 form a G5 region; the sequence is ISA. A KH type-2 domain is found at 202–280; that stretch reads TREEIPHALY…QLDLQVRVNK (79 aa).

The protein belongs to the TRAFAC class TrmE-Era-EngA-EngB-Septin-like GTPase superfamily. Era GTPase family. Monomer.

It localises to the cytoplasm. Its subcellular location is the cell inner membrane. Functionally, an essential GTPase that binds both GDP and GTP, with rapid nucleotide exchange. Plays a role in 16S rRNA processing and 30S ribosomal subunit biogenesis and possibly also in cell cycle regulation and energy metabolism. This Treponema denticola (strain ATCC 35405 / DSM 14222 / CIP 103919 / JCM 8153 / KCTC 15104) protein is GTPase Era.